We begin with the raw amino-acid sequence, 172 residues long: Protein GrpE (172 aa).

It belongs to the GrpE family. As to quaternary structure, homodimer.

It localises to the cytoplasm. In terms of biological role, participates actively in the response to hyperosmotic and heat shock by preventing the aggregation of stress-denatured proteins, in association with DnaK and GrpE. It is the nucleotide exchange factor for DnaK and may function as a thermosensor. Unfolded proteins bind initially to DnaJ; upon interaction with the DnaJ-bound protein, DnaK hydrolyzes its bound ATP, resulting in the formation of a stable complex. GrpE releases ADP from DnaK; ATP binding to DnaK triggers the release of the substrate protein, thus completing the reaction cycle. Several rounds of ATP-dependent interactions between DnaJ, DnaK and GrpE are required for fully efficient folding. In Thermotoga sp. (strain RQ2), this protein is Protein GrpE.